The sequence spans 448 residues: MAKNMAQIFPFIAVFLSCSFIFVLSSSQNSQSLYHNPQSTSSSSSKPSLLVLPIQQDASTGLHWANIHKRTPLMQVPVLLDLNGKHLWVTCSYHYSSSTYQAPFCHSTQCSRANSHHCFTCTDSATSRPGCHNNTCALMSSNPVTQEAGFGELAQDVLAIHSTHGSKLGPMVRVLQYLFSCAPSFLAQKGLPNNVQGPLGLGHAPISLQNQLFSHFGLKRQFAMCLSRYPTSNGAILFGDIYDLDNNYIHNSIDVLIDMVYTPLRISQQGEYFMQVNAIRVNKHMVVPTKNPSMLSSYHGDSRIGGAMITTTNPYTILHHSIFEVFTQVFANNMPKEAQVESVGPFGLCYDSRKLSGGIPSVEFVMDSHDDVWRISDENLMVQAQNGVSCLGFVDGGMHTRTEIVLGTHQLEENMVVFDLERSRVEFNSNSLKSHGKTCANIFDLNNA.

The signal sequence occupies residues methionine 1 to leucine 33. Residues histidine 63–asparagine 428 enclose the Peptidase A1 domain. 5 disulfide bridges follow: cysteine 91–cysteine 181, cysteine 105–cysteine 118, cysteine 110–cysteine 136, cysteine 121–cysteine 131, and cysteine 349–cysteine 390. Asparagine 133 carries an N-linked (GlcNAc...) asparagine glycan.

Belongs to the peptidase A1 family. Two-subunit monomeric unit made of alpha and beta subunits coupled by disulfide bonds (at pH 4.5 and under non-reducing conditions). Can also form oligomers including dimer, tetramer and cyclic hexamer (trimer of dimers) (at pH &gt; 5.5). Component of globulins complexes which accumulate in seeds. Interacts with flavonoids (e.g. apigenin glucosides) present in globulins complexes. In terms of processing, glycosylated on alpha chain. In terms of tissue distribution, expressed in developing seeds and in the young roots and cotyledons of germinating seeds and young seedlings.

Its subcellular location is the secreted. The protein localises to the extracellular space. Functionally, sulfur-rich seed storage protein that remains undegraded at germination. The polypeptide is Gamma conglutin 2 (Lupinus albus (White lupine)).